Here is a 122-residue protein sequence, read N- to C-terminus: Large ribosomal subunit protein uL14 (122 aa).

This sequence belongs to the universal ribosomal protein uL14 family. In terms of assembly, part of the 50S ribosomal subunit. Forms a cluster with proteins L3 and L19. In the 70S ribosome, L14 and L19 interact and together make contacts with the 16S rRNA in bridges B5 and B8.

Functionally, binds to 23S rRNA. Forms part of two intersubunit bridges in the 70S ribosome. This chain is Large ribosomal subunit protein uL14, found in Treponema denticola (strain ATCC 35405 / DSM 14222 / CIP 103919 / JCM 8153 / KCTC 15104).